The following is a 274-amino-acid chain: 2,3,4,5-tetrahydropyridine-2,6-dicarboxylate N-succinyltransferase (274 aa).

Substrate contacts are provided by Arg104 and Asp141.

This sequence belongs to the transferase hexapeptide repeat family. In terms of assembly, homotrimer.

The protein resides in the cytoplasm. It catalyses the reaction (S)-2,3,4,5-tetrahydrodipicolinate + succinyl-CoA + H2O = (S)-2-succinylamino-6-oxoheptanedioate + CoA. Its pathway is amino-acid biosynthesis; L-lysine biosynthesis via DAP pathway; LL-2,6-diaminopimelate from (S)-tetrahydrodipicolinate (succinylase route): step 1/3. The sequence is that of 2,3,4,5-tetrahydropyridine-2,6-dicarboxylate N-succinyltransferase from Idiomarina loihiensis (strain ATCC BAA-735 / DSM 15497 / L2-TR).